The chain runs to 93 residues: Long neurotoxin 1 (93 aa).

An N-terminal signal peptide occupies residues 1–21; sequence MKTLLLTLVVVTIVCLDLGNS. Disulfide bonds link Cys24/Cys42, Cys35/Cys63, Cys48/Cys52, Cys67/Cys78, and Cys79/Cys84.

It belongs to the three-finger toxin family. Long-chain subfamily. Type II alpha-neurotoxin sub-subfamily. Expressed by the venom gland.

The protein resides in the secreted. Functionally, binds with high affinity to muscular (alpha-1/CHRNA1) and neuronal (alpha-7/CHRNA7) nicotinic acetylcholine receptor (nAChR) and inhibits acetylcholine from binding to the receptor, thereby impairing neuromuscular and neuronal transmission. The sequence is that of Long neurotoxin 1 from Tropidechis carinatus (Australian rough-scaled snake).